The primary structure comprises 251 residues: MSSFDRRIEAACKFDDERYYKQYHRYFDVLAQVHSVVETINGAQMLRVWRGRKFGPGASAERRERRLFHVTQDSFKRYIVPPNPRIGKAIEENGKELLIEIDVYDDHRDGLKNLNSGDFVAIQNVHAASTRQTEMQVLHGGGASYQRGITTVPVDFEHEAFQNFKKKVEAVLETVAYDENFTEFQQPEEVAENHVDEEPQEEALPRGVVLRTETCDFMDMELDNWPEGPPKTFAEAIARANNSRRPRDPPQ.

The disordered stretch occupies residues 221 to 251 (ELDNWPEGPPKTFAEAIARANNSRRPRDPPQ).

Belongs to the telombin family.

It localises to the nucleus. It is found in the chromosome. The protein localises to the telomere. Its function is as follows. Telomeric DNA-binding protein, which binds to two or more single-stranded G-rich repeat sequences (G-strand), with high specificity to the 5'-TTAGGC-3' sequence. In addition, repeat sequence binding requires a 3' single-stranded telomeric overhang. Acts redundantly with pot-1 to negatively regulate telomerase-mediated telomere extension. Also regulates telomere length by the telomerase-independent telomere maintenance pathway called ALT (alternative lengthening of telomeres). Does not appear to have a role in anchoring telomeres to the nuclear envelope. The protein is Protection of telomeres homolog 2 of Caenorhabditis elegans.